The chain runs to 931 residues: Probable ubiquitin-like-specific protease 2B (931 aa).

Residues S204–W224 are disordered. Acidic residues predominate over residues S215–W224. Residues H489, D522, and C577 contribute to the active site. The interval H825–K931 is disordered. Residues S839–D851 show a composition bias toward polar residues. Positions N873–P904 are enriched in basic and acidic residues.

The protein belongs to the peptidase C48 family.

In terms of biological role, protease that catalyzes two essential functions in the SUMO pathway: processing of full-length SUMOs to their mature forms and deconjugation of SUMO from targeted proteins. The sequence is that of Probable ubiquitin-like-specific protease 2B (ULP2B) from Arabidopsis thaliana (Mouse-ear cress).